The chain runs to 591 residues: DDB1- and CUL4-associated factor 8 (591 aa).

Residues 1-25 (MSNKRPNTTDGRTDLANGSLSSSPE) are compositionally biased toward polar residues. Residues 1 to 140 (MSNKRPNTTD…EDWVSSETTA (140 aa)) form a disordered region. Phosphoserine occurs at positions 22 and 23. A Nuclear export signal motif is present at residues 40–51 (IEVEASDLSLSL). 2 stretches are compositionally biased toward basic and acidic residues: residues 66–100 (RGTD…HGHS) and 118–131 (SRDQ…RALE). Phosphoserine occurs at positions 100, 123, and 124. 7 WD repeats span residues 185-224 (GHTG…PVLD), 228-269 (GHKS…CCKN), 275-315 (QHKG…PASK), 323-363 (EKKV…ENEN), 379-418 (ESKA…GAQY), 426-466 (RNNA…IIQF), and 470-509 (DKGG…STEL). Arginine 198 is modified (omega-N-methylarginine; by PRMT1). A disordered region spans residues 552–591 (HRRWREPGVGATDADSDESPSSSDTSDEEEGPDRVQCMPS).

It belongs to the WD repeat DCAF8 family. In terms of assembly, interacts with DDB1, CUL4A and CUL4B. Interacts with KPNA1, KPNB1 and XPO1. Expressed in the brain.

It is found in the nucleus. It localises to the cytoplasm. It participates in protein modification; protein ubiquitination. May function as a substrate receptor for CUL4-DDB1 E3 ubiquitin-protein ligase complex. The polypeptide is DDB1- and CUL4-associated factor 8 (Dcaf8) (Mus musculus (Mouse)).